A 171-amino-acid polypeptide reads, in one-letter code: Crossover junction endodeoxyribonuclease RuvC (171 aa).

Residues D7, E67, and D139 contribute to the active site. Mg(2+)-binding residues include D7, E67, and D139.

Belongs to the RuvC family. Homodimer which binds Holliday junction (HJ) DNA. The HJ becomes 2-fold symmetrical on binding to RuvC with unstacked arms; it has a different conformation from HJ DNA in complex with RuvA. In the full resolvosome a probable DNA-RuvA(4)-RuvB(12)-RuvC(2) complex forms which resolves the HJ. Mg(2+) serves as cofactor.

The protein localises to the cytoplasm. It catalyses the reaction Endonucleolytic cleavage at a junction such as a reciprocal single-stranded crossover between two homologous DNA duplexes (Holliday junction).. The RuvA-RuvB-RuvC complex processes Holliday junction (HJ) DNA during genetic recombination and DNA repair. Endonuclease that resolves HJ intermediates. Cleaves cruciform DNA by making single-stranded nicks across the HJ at symmetrical positions within the homologous arms, yielding a 5'-phosphate and a 3'-hydroxyl group; requires a central core of homology in the junction. The consensus cleavage sequence is 5'-(A/T)TT(C/G)-3'. Cleavage occurs on the 3'-side of the TT dinucleotide at the point of strand exchange. HJ branch migration catalyzed by RuvA-RuvB allows RuvC to scan DNA until it finds its consensus sequence, where it cleaves and resolves the cruciform DNA. The protein is Crossover junction endodeoxyribonuclease RuvC of Geotalea uraniireducens (strain Rf4) (Geobacter uraniireducens).